The sequence spans 468 residues: Glutamate--tRNA ligase (468 aa).

5–7 (RIA) contributes to the L-glutamate binding site. The 'HIGH' region motif lies at 8 to 18 (PSPTGDPHVGT). Position 15 (His15) interacts with ATP. L-glutamate-binding positions include Glu41, 187–191 (YHLAN), and Arg205. ATP-binding positions include Glu208, Leu236, 243–247 (KISKR), and Lys246. A 'KMSKS' region motif is present at residues 243 to 247 (KISKR). The interval 432–447 (QPLRAALTGSLETPGL) is interaction with tRNA.

The protein belongs to the class-I aminoacyl-tRNA synthetase family. Glutamate--tRNA ligase type 1 subfamily. In terms of assembly, monomer.

Its subcellular location is the cytoplasm. It catalyses the reaction tRNA(Glu) + L-glutamate + ATP = L-glutamyl-tRNA(Glu) + AMP + diphosphate. Its activity is regulated as follows. In the absence of bound tRNA, ATP is bound in a non-productive mode, and the enzyme cannot activate amino acids. Its function is as follows. Catalyzes the attachment of glutamate to tRNA(Glu) in a two-step reaction: glutamate is first activated by ATP to form Glu-AMP and then transferred to the acceptor end of tRNA(Glu). The chain is Glutamate--tRNA ligase from Thermus thermophilus (strain ATCC 27634 / DSM 579 / HB8).